The following is a 304-amino-acid chain: Glutamyl-Q tRNA(Asp) synthetase (304 aa).

L-glutamate-binding positions include 14 to 18 (RFAPS) and E50. A 'HIGH' region motif is present at residues 17–27 (PSPSGPLHFGS). The Zn(2+) site is built by C106, C108, Y120, and C124. Residues Y178 and R196 each coordinate L-glutamate. The 'KMSKS' region motif lies at 234 to 238 (KLSKQ). K237 is an ATP binding site.

Belongs to the class-I aminoacyl-tRNA synthetase family. GluQ subfamily. Zn(2+) is required as a cofactor.

Its function is as follows. Catalyzes the tRNA-independent activation of glutamate in presence of ATP and the subsequent transfer of glutamate onto a tRNA(Asp). Glutamate is transferred on the 2-amino-5-(4,5-dihydroxy-2-cyclopenten-1-yl) moiety of the queuosine in the wobble position of the QUC anticodon. The sequence is that of Glutamyl-Q tRNA(Asp) synthetase from Vibrio cholerae serotype O1 (strain ATCC 39315 / El Tor Inaba N16961).